Reading from the N-terminus, the 340-residue chain is MTSLIRSNSWGSFVQTITSSSNRLYIGWFGLLVFPLLSLATVAYITAFFLAPAVDIDGIREPVAGSLIYGNNIISGAVIPSSNAIGVHFYPLWESLGLDEWLYNGGTYQFVVFHFFLGVCGWMGREWEFSYRLGMRPWIFVAFSAPIAAAAAVFIIYPIGQGSFSDGMPLGIQGTFNFMLVFQAEHKILMHPFHILGVAGVFGGSLFSAMHGSLVSSSLLAETAGSESLNNGYVFGQEDETYSISAAHAYFGRLIFQYASFNNSRSLHFFLAAWPVIGIWITSLGVATMAFNLNGFNFNQSILDESGHYINSWADILNRADLGIEVMHERNAHNFPLDLA.

Helical transmembrane passes span 25–42 (YIGW…LATV), 114–129 (HFFL…EWEF), and 138–152 (WIFV…AAAA). Residue His114 coordinates chlorophyll a. Trp122 lines the pheophytin a pocket. Positions 166 and 185 each coordinate [CaMn4O5] cluster. The chain crosses the membrane as a helical span at residues 193 to 214 (FHILGVAGVFGGSLFSAMHGSL). His194 contributes to the chlorophyll a binding site. A quinone contacts are provided by residues His211 and 260–261 (SF). Residue His211 participates in Fe cation binding. Residue His268 coordinates Fe cation. A helical membrane pass occupies residues 270-284 (FLAAWPVIGIWITSL). [CaMn4O5] cluster is bound by residues His328, Glu329, Asp338, and Ala340.

The protein belongs to the reaction center PufL/M/PsbA/D family. PSII is composed of 1 copy each of membrane proteins PsbA, PsbB, PsbC, PsbD, PsbE, PsbF, PsbH, PsbI, PsbJ, PsbK, PsbL, PsbM, PsbT, PsbX, PsbY, PsbZ, Psb30/Ycf12, at least 3 peripheral proteins of the oxygen-evolving complex and a large number of cofactors. It forms dimeric complexes. The cofactor is The D1/D2 heterodimer binds P680, chlorophylls that are the primary electron donor of PSII, and subsequent electron acceptors. It shares a non-heme iron and each subunit binds pheophytin, quinone, additional chlorophylls, carotenoids and lipids. D1 provides most of the ligands for the Mn4-Ca-O5 cluster of the oxygen-evolving complex (OEC). There is also a Cl(-1) ion associated with D1 and D2, which is required for oxygen evolution. The PSII complex binds additional chlorophylls, carotenoids and specific lipids.. Tyr-157 forms a radical intermediate that is referred to as redox-active TyrZ, YZ or Y-Z.

The protein resides in the plastid. It localises to the chloroplast thylakoid membrane. It carries out the reaction 2 a plastoquinone + 4 hnu + 2 H2O = 2 a plastoquinol + O2. In terms of biological role, photosystem II (PSII) is a light-driven water:plastoquinone oxidoreductase that uses light energy to abstract electrons from H(2)O, generating O(2) and a proton gradient subsequently used for ATP formation. It consists of a core antenna complex that captures photons, and an electron transfer chain that converts photonic excitation into a charge separation. The D1/D2 (PsbA/PsbD) reaction center heterodimer binds P680, the primary electron donor of PSII as well as several subsequent electron acceptors. The polypeptide is Photosystem II protein D1 (Amphidinium carterae (Dinoflagellate)).